The following is a 462-amino-acid chain: UDP-N-acetylmuramoylalanine--D-glutamate ligase (462 aa).

109-115 (GTDGKST) serves as a coordination point for ATP.

The protein belongs to the MurCDEF family.

Its subcellular location is the cytoplasm. The catalysed reaction is UDP-N-acetyl-alpha-D-muramoyl-L-alanine + D-glutamate + ATP = UDP-N-acetyl-alpha-D-muramoyl-L-alanyl-D-glutamate + ADP + phosphate + H(+). The protein operates within cell wall biogenesis; peptidoglycan biosynthesis. Functionally, cell wall formation. Catalyzes the addition of glutamate to the nucleotide precursor UDP-N-acetylmuramoyl-L-alanine (UMA). The sequence is that of UDP-N-acetylmuramoylalanine--D-glutamate ligase from Leptospira borgpetersenii serovar Hardjo-bovis (strain JB197).